The following is a 192-amino-acid chain: Probable chorismate pyruvate-lyase (192 aa).

Substrate is bound by residues arginine 85, leucine 120, and glutamate 176.

Belongs to the UbiC family.

It is found in the cytoplasm. It carries out the reaction chorismate = 4-hydroxybenzoate + pyruvate. Its pathway is cofactor biosynthesis; ubiquinone biosynthesis. In terms of biological role, removes the pyruvyl group from chorismate, with concomitant aromatization of the ring, to provide 4-hydroxybenzoate (4HB) for the ubiquinone pathway. The protein is Probable chorismate pyruvate-lyase of Pseudoalteromonas atlantica (strain T6c / ATCC BAA-1087).